A 216-amino-acid chain; its full sequence is NKG2-D type II integral membrane protein (216 aa).

Residues 1–51 (MGWIRGRRSRHSWEMSEFHNYNLDLAKNDFSTRWQKQRCPVIKSKCRENTS) are Cytoplasmic-facing. A helical; Signal-anchor for type II membrane protein membrane pass occupies residues 52–72 (PLFFCCFIAVAMGIRFIVMVT). The Extracellular portion of the chain corresponds to 73–216 (IWSAVFLNSL…NTYICMQRTV (144 aa)). 2 disulfide bridges follow: cysteine 96–cysteine 105 and cysteine 99–cysteine 110. The C-type lectin domain occupies 98–213 (PCPKNWICYK…STPNTYICMQ (116 aa)). 4 N-linked (GlcNAc...) asparagine glycosylation sites follow: asparagine 115, asparagine 131, asparagine 163, and asparagine 202. 2 cysteine pairs are disulfide-bonded: cysteine 127–cysteine 211 and cysteine 189–cysteine 203.

As to quaternary structure, homodimer; disulfide-linked. Heterohexamer composed of two subunits of KLRK1 and four subunits of HCST/DAP10. Interacts (via transmembrane domain) with HCST/DAP10 (via transmembrane domain); the interaction is required for KLRK1 NK cell surface and induces NK cell-mediated cytotoxicity. Can form disulfide-bonded heterodimer with CD94. Interacts with CEACAM1; recruits PTPN6 that dephosphorylates VAV1.

It localises to the cell membrane. Functions as an activating and costimulatory receptor involved in immunosurveillance upon binding to various cellular stress-inducible ligands displayed at the surface of autologous tumor cells and virus-infected cells. Provides both stimulatory and costimulatory innate immune responses on activated killer (NK) cells, leading to cytotoxic activity. Acts as a costimulatory receptor for T-cell receptor (TCR) in CD8(+) T-cell-mediated adaptive immune responses by amplifying T-cell activation. Stimulates perforin-mediated elimination of ligand-expressing tumor cells. Signaling involves calcium influx, culminating in the expression of TNF-alpha. Participates in NK cell-mediated bone marrow graft rejection. May play a regulatory role in differentiation and survival of NK cells. Binds to ligands belonging to various subfamilies of MHC class I-related glycoproteins. The chain is NKG2-D type II integral membrane protein (KLRK1) from Pongo pygmaeus (Bornean orangutan).